Consider the following 701-residue polypeptide: L-glutamate oxidase precursor (701 aa).

An N-terminal signal peptide occupies residues 1–14; sequence MTTDTARRHTGAER. FAD contacts are provided by alanine 69, glutamate 88, alanine 89, arginine 97, methionine 123, arginine 124, methionine 354, and serine 409. A propeptide spanning residues 481 to 520 is cleaved from the precursor; that stretch reads LALPQSVRNLPTGLLGAHPSVDESRIGEEQVEYYRNSELR. The FAD site is built by glutamate 645, tryptophan 653, and isoleucine 654. The propeptide occupies 684-701; sequence RRGAAAATEPMREEALTS.

This sequence belongs to the flavin monoamine oxidase family. LGOX subfamily. The LGOX precursor forms homodimers. The mature enzyme is a heterohexamer composed of 2 alpha chains, 2 beta chains and 2 gamma chains (alpha2beta2gamma2). It depends on FAD as a cofactor. In terms of processing, the precursor form is proteolytically cleaved by an endopeptidase into alpha, beta and gamma chains, which form the stable mature enzyme. Activation by proteolysis occurs after secretion.

Its subcellular location is the secreted. It carries out the reaction L-glutamate + O2 + H2O = H2O2 + 2-oxoglutarate + NH4(+). With respect to regulation, produced as a single polypeptide precursor and is activated by proteolytic cleavage. The LGOX precursor is an active enzyme, but it exhibits lower catalytic efficiency and lower thermostability compared with the mature hexameric LGOX. The mature form is strongly inhibited by p-chloromercuribenzoate, but not by CuCl(2), EDTA and diethyldithiocarbamate. Functionally, catalyzes the oxidative deamination of L-glutamate to 2-ketoglutarate along with the production of ammonia and hydrogen peroxide. Shows strict substrate specificity for L-glutamate, and exhibits only very weak activity with L-aspartate. This Streptomyces sp protein is L-glutamate oxidase precursor.